Reading from the N-terminus, the 91-residue chain is MKVKVTLSAVQFRSLVDYESRSFHLDLGEGSTLGDAVRAVEEMLSAEIEPLLERGNVRIMMNNSLVDYQKEKNRVLNDGDALIFITPISGG.

This is an uncharacterized protein from Archaeoglobus fulgidus (strain ATCC 49558 / DSM 4304 / JCM 9628 / NBRC 100126 / VC-16).